The sequence spans 446 residues: Na(+)/H(+) antiporter NhaA (446 aa).

11 helical membrane passes run 23–43 (GGMLLMGVVLLAMFLANSPWG), 73–93 (LMTFINDALMAVFFFSVGLEI), 109–129 (LLPIVAACGGMLVPVLIYYFM), 138–158 (GLAIPMATDIAFSLGVLSLFG), 167–187 (VFLTAFAVVDDIGGILVIALF), 193–213 (SVNYLIASAGILLILCGGNFF), 219–239 (WFYIFWGVIMWYLFLQSGIHA), 314–334 (MVNYIILPLFAFANAGVSLTA), 348–368 (VLAGLLAGKFAGIYFFTWLVI), 381–401 (WVNLTGICLLGGIGFTVSLFI), and 419–439 (GVILGTVLAGVLAYLVLQFAL).

It belongs to the NhaA Na(+)/H(+) (TC 2.A.33) antiporter family.

It is found in the cell inner membrane. The catalysed reaction is Na(+)(in) + 2 H(+)(out) = Na(+)(out) + 2 H(+)(in). Na(+)/H(+) antiporter that extrudes sodium in exchange for external protons. The sequence is that of Na(+)/H(+) antiporter NhaA from Phocaeicola vulgatus (strain ATCC 8482 / DSM 1447 / JCM 5826 / CCUG 4940 / NBRC 14291 / NCTC 11154) (Bacteroides vulgatus).